Here is a 185-residue protein sequence, read N- to C-terminus: ATP synthase subunit b 2 (185 aa).

The interval 1–24 is disordered; it reads MADSHGNAKGATAHTEAGGGHKAP. The helical transmembrane segment at 34 to 56 threads the bilayer; that stretch reads ASQLVSLTIAFVALYLISSRLAL.

It belongs to the ATPase B chain family. F-type ATPases have 2 components, F(1) - the catalytic core - and F(0) - the membrane proton channel. F(1) has five subunits: alpha(3), beta(3), gamma(1), delta(1), epsilon(1). F(0) has three main subunits: a(1), b(2) and c(10-14). The alpha and beta chains form an alternating ring which encloses part of the gamma chain. F(1) is attached to F(0) by a central stalk formed by the gamma and epsilon chains, while a peripheral stalk is formed by the delta and b chains.

It is found in the cell inner membrane. F(1)F(0) ATP synthase produces ATP from ADP in the presence of a proton or sodium gradient. F-type ATPases consist of two structural domains, F(1) containing the extramembraneous catalytic core and F(0) containing the membrane proton channel, linked together by a central stalk and a peripheral stalk. During catalysis, ATP synthesis in the catalytic domain of F(1) is coupled via a rotary mechanism of the central stalk subunits to proton translocation. Functionally, component of the F(0) channel, it forms part of the peripheral stalk, linking F(1) to F(0). The b'-subunit is a diverged and duplicated form of b found in plants and photosynthetic bacteria. The polypeptide is ATP synthase subunit b 2 (atpF2) (Nitrobacter hamburgensis (strain DSM 10229 / NCIMB 13809 / X14)).